We begin with the raw amino-acid sequence, 367 residues long: bZIP transcription factor 18 (367 aa).

The segment at M1 to G57 is disordered. Residues H38–E47 are compositionally biased toward basic and acidic residues. A Phosphoserine modification is found at S70. The disordered stretch occupies residues S79–S124. Low complexity predominate over residues G82–D96. Residues D148–L211 form the bZIP domain. The interval K150–R171 is basic motif. Residues K166–E245 adopt a coiled-coil conformation. Residues L176–L190 form a leucine-zipper region. Composition is skewed to polar residues over residues Q294–T309, A317–Y328, and F354–M367. Disordered regions lie at residues Q294–E330 and L343–M367.

As to quaternary structure, interacts with NEAP1. Forms homodimer and heterodimer with bZIP34 and bZIP61. As to expression, ubiquitous. Strongly expressed in mature pollen.

Its subcellular location is the nucleus. It localises to the nucleoplasm. The protein localises to the cytoplasm. The protein resides in the perinuclear region. Transcription factor that may participate with bZIP34 in the gametophytic control of pollen development. In Arabidopsis thaliana (Mouse-ear cress), this protein is bZIP transcription factor 18.